Consider the following 133-residue polypeptide: ATP synthase epsilon chain, chloroplastic (133 aa).

Belongs to the ATPase epsilon chain family. F-type ATPases have 2 components, CF(1) - the catalytic core - and CF(0) - the membrane proton channel. CF(1) has five subunits: alpha(3), beta(3), gamma(1), delta(1), epsilon(1). CF(0) has three main subunits: a, b and c.

The protein localises to the plastid. It is found in the chloroplast thylakoid membrane. Its function is as follows. Produces ATP from ADP in the presence of a proton gradient across the membrane. This Lotus japonicus (Lotus corniculatus var. japonicus) protein is ATP synthase epsilon chain, chloroplastic.